The following is a 154-amino-acid chain: uncharacterized protein (154 aa).

The HTH marR-type domain occupies Arg-7 to Asp-143. Positions Ala-57 to Lys-80 form a DNA-binding region, H-T-H motif.

This is an uncharacterized protein from Bacillus subtilis (strain 168).